The chain runs to 903 residues: E3 ubiquitin-protein ligase DDB_G0292642 (903 aa).

Disordered stretches follow at residues 115-137 (FTLP…SSSD), 167-236 (LLKR…VIGS), 284-366 (VNKT…NNLK), 415-487 (TPSL…TTEI), and 549-576 (DDSE…GSEG). Low complexity-rich tracts occupy residues 120-130 (TTNNNNNNTTN) and 178-216 (TTTT…TIDT). Over residues 217 to 232 (SSEDDDESISSSDDDI) the composition is skewed to acidic residues. Composition is skewed to low complexity over residues 287 to 301 (TSTT…TTTT) and 311 to 323 (NRNN…NNNN). Residues 313–352 (NNNNNNNNNNNKRFEIESEEESETDISSEEEENNNNNNNN) are a coiled coil. Over residues 329 to 345 (ESEEESETDISSEEEEN) the composition is skewed to acidic residues. Residues 346–364 (NNNNNNNSNNNNNSNNNNN) are compositionally biased toward low complexity. Polar residues predominate over residues 415-427 (TPSLRLSSAHLPN). Positions 428 to 443 (TTTTTTTTTTTTTTTT) are enriched in low complexity. Acidic residues-rich tracts occupy residues 451 to 466 (NDDD…DSEI) and 549 to 568 (DDSE…ESDS). Residues 542 to 569 (AELVFEYDDSEEEEEEEEEEEGEESDSE) adopt a coiled-coil conformation. Residues 612 to 832 (EPVECKICYM…NEYPECFDRQ (221 aa)) are TRIAD supradomain. Positions 616, 619, 634, 636, 639, 642, 661, 666, 704, 709, 725, 728, 733, 736, 741, 746, 782, and 785 each coordinate Zn(2+). Residues 616-666 (CKICYMEYDQSNEVFTLECDHVYCFDCITEHLRILITEGRVLDISCPHPQC) form an RING-type 1 zinc finger. The segment at 683–746 (NWLKYQKFSM…GEYSHEGAKC (64 aa)) adopts an IBR-type zinc-finger fold. Residues 782–811 (CPTCKSHIEKHDGCNHMTCINCQHQFCWLC) form an RING-type 2; atypical zinc finger. C795 is an active-site residue. 6 residues coordinate Zn(2+): C800, C803, C808, C811, H819, and C828. A helical transmembrane segment spans residues 864–884 (TAAFTVGAPLLLIGGAVLLCV).

This sequence belongs to the RBR family. RNF14 subfamily.

Its subcellular location is the membrane. It catalyses the reaction [E2 ubiquitin-conjugating enzyme]-S-ubiquitinyl-L-cysteine + [acceptor protein]-L-lysine = [E2 ubiquitin-conjugating enzyme]-L-cysteine + [acceptor protein]-N(6)-ubiquitinyl-L-lysine.. It functions in the pathway protein modification; protein ubiquitination. Functionally, E3 ubiquitin-protein ligase. This Dictyostelium discoideum (Social amoeba) protein is E3 ubiquitin-protein ligase DDB_G0292642.